The following is a 186-amino-acid chain: Peptidyl-tRNA hydrolase (186 aa).

Residue Y14 coordinates tRNA. H19 (proton acceptor) is an active-site residue. TRNA contacts are provided by F64, N66, and N112.

It belongs to the PTH family. In terms of assembly, monomer.

It localises to the cytoplasm. It carries out the reaction an N-acyl-L-alpha-aminoacyl-tRNA + H2O = an N-acyl-L-amino acid + a tRNA + H(+). Hydrolyzes ribosome-free peptidyl-tRNAs (with 1 or more amino acids incorporated), which drop off the ribosome during protein synthesis, or as a result of ribosome stalling. Functionally, catalyzes the release of premature peptidyl moieties from peptidyl-tRNA molecules trapped in stalled 50S ribosomal subunits, and thus maintains levels of free tRNAs and 50S ribosomes. The protein is Peptidyl-tRNA hydrolase of Anaplasma marginale (strain St. Maries).